Consider the following 256-residue polypeptide: 5-oxoprolinase subunit A (256 aa).

This sequence belongs to the LamB/PxpA family. In terms of assembly, forms a complex composed of PxpA, PxpB and PxpC.

The catalysed reaction is 5-oxo-L-proline + ATP + 2 H2O = L-glutamate + ADP + phosphate + H(+). Catalyzes the cleavage of 5-oxoproline to form L-glutamate coupled to the hydrolysis of ATP to ADP and inorganic phosphate. This is 5-oxoprolinase subunit A from Cutibacterium acnes (strain DSM 16379 / KPA171202) (Propionibacterium acnes).